Here is a 283-residue protein sequence, read N- to C-terminus: MITTQSISDIRKQVTAWRLKGETVAFVPTMGNLHLGHITLVKEAKTRADHVVASIFVNPMQFGQNEDLDAYPRTLADDQAALIEAGAELLFTPTPDIIYPKGMDAQTFVEVPSISDELCGASRPGHFRGVATIVCKLFNIVQPDIAVFGQKDFQQLLVIRTMVEDLSMPIEIVGIETIRETSGLAMSSRNGYLTTEQKDQASQIKRTLNNMALSLKAGLLIKDVVAKAQAELVHVGFRNDYLDVRNANTFAIATAADKDLVILVAAYMGSTRLIDNLVVKLAY.

30-37 (MGNLHLGH) serves as a coordination point for ATP. Residue His-37 is the Proton donor of the active site. (R)-pantoate is bound at residue Gln-61. Residue Gln-61 coordinates beta-alanine. 149–152 (GQKD) lines the ATP pocket. Residue Gln-155 coordinates (R)-pantoate. ATP contacts are provided by residues Ile-178 and 186–189 (MSSR).

It belongs to the pantothenate synthetase family. As to quaternary structure, homodimer.

It is found in the cytoplasm. It carries out the reaction (R)-pantoate + beta-alanine + ATP = (R)-pantothenate + AMP + diphosphate + H(+). Its pathway is cofactor biosynthesis; (R)-pantothenate biosynthesis; (R)-pantothenate from (R)-pantoate and beta-alanine: step 1/1. Catalyzes the condensation of pantoate with beta-alanine in an ATP-dependent reaction via a pantoyl-adenylate intermediate. This chain is Pantothenate synthetase, found in Shewanella pealeana (strain ATCC 700345 / ANG-SQ1).